A 426-amino-acid chain; its full sequence is Glucose-6-phosphate isomerase (426 aa).

Glutamate 282 functions as the Proton donor in the catalytic mechanism. Residues histidine 303 and lysine 417 contribute to the active site.

It belongs to the GPI family.

The protein resides in the cytoplasm. It catalyses the reaction alpha-D-glucose 6-phosphate = beta-D-fructose 6-phosphate. It participates in carbohydrate biosynthesis; gluconeogenesis. Its pathway is carbohydrate degradation; glycolysis; D-glyceraldehyde 3-phosphate and glycerone phosphate from D-glucose: step 2/4. Functionally, catalyzes the reversible isomerization of glucose-6-phosphate to fructose-6-phosphate. In Onion yellows phytoplasma (strain OY-M), this protein is Glucose-6-phosphate isomerase.